The sequence spans 159 residues: Ribosome maturation factor RimP (159 aa).

It belongs to the RimP family.

The protein resides in the cytoplasm. Its function is as follows. Required for maturation of 30S ribosomal subunits. The sequence is that of Ribosome maturation factor RimP from Trichlorobacter lovleyi (strain ATCC BAA-1151 / DSM 17278 / SZ) (Geobacter lovleyi).